The sequence spans 195 residues: Glutathione S-transferase class-mu 26 kDa isozyme (195 aa).

The region spanning 1 to 83 is the GST N-terminal domain; the sequence is MAPKLGYWKI…YIADKHNMLG (83 aa). Glutathione is bound by residues 7–8, 41–45, 54–55, and 67–68; these read YW, WRNEK, NL, and QS. One can recognise a GST C-terminal domain in the interval 85–195; the sequence is CPKERAEISM…TFGGGDAPPK (111 aa). Position 111 (Y111) interacts with substrate.

This sequence belongs to the GST superfamily. Mu family. In terms of assembly, homodimer.

The catalysed reaction is RX + glutathione = an S-substituted glutathione + a halide anion + H(+). Functionally, conjugation of reduced glutathione to a wide number of exogenous and endogenous hydrophobic electrophiles. Its function is as follows. GST isoenzymes appear to play a central role in the parasite detoxification system. Other functions are also suspected including a role in increasing the solubility of haematin in the parasite gut. The chain is Glutathione S-transferase class-mu 26 kDa isozyme from Schistosoma mansoni (Blood fluke).